The primary structure comprises 668 residues: Bifunctional polymyxin resistance protein ArnA (668 aa).

The formyltransferase ArnAFT stretch occupies residues 1–307; sequence MSNKAVVFAY…ELGLVDGSLL (307 aa). The active-site Proton donor; for formyltransferase activity is His106. (6R)-10-formyltetrahydrofolate-binding positions include Arg116 and 138 to 142; that span reads VKRAD. The interval 317–668 is dehydrogenase ArnADH; the sequence is RRTRVLILGV…IADRAKQEAR (352 aa). NAD(+)-binding positions include Asp350 and 371–372; that span reads DI. Residues Ala396, Tyr401, and 435-436 each bind UDP-alpha-D-glucuronate; that span reads TS. The active-site Proton acceptor; for decarboxylase activity is the Glu437. Residues Arg463, Asn494, 528-537, and Tyr615 each bind UDP-alpha-D-glucuronate; that span reads RLFDGGEQKR. Residue Arg621 is the Proton donor; for decarboxylase activity of the active site.

In the N-terminal section; belongs to the Fmt family. UDP-L-Ara4N formyltransferase subfamily. It in the C-terminal section; belongs to the NAD(P)-dependent epimerase/dehydratase family. UDP-glucuronic acid decarboxylase subfamily. Homohexamer, formed by a dimer of trimers.

The enzyme catalyses UDP-alpha-D-glucuronate + NAD(+) = UDP-beta-L-threo-pentopyranos-4-ulose + CO2 + NADH. It catalyses the reaction UDP-4-amino-4-deoxy-beta-L-arabinose + (6R)-10-formyltetrahydrofolate = UDP-4-deoxy-4-formamido-beta-L-arabinose + (6S)-5,6,7,8-tetrahydrofolate + H(+). It functions in the pathway nucleotide-sugar biosynthesis; UDP-4-deoxy-4-formamido-beta-L-arabinose biosynthesis; UDP-4-deoxy-4-formamido-beta-L-arabinose from UDP-alpha-D-glucuronate: step 1/3. It participates in nucleotide-sugar biosynthesis; UDP-4-deoxy-4-formamido-beta-L-arabinose biosynthesis; UDP-4-deoxy-4-formamido-beta-L-arabinose from UDP-alpha-D-glucuronate: step 3/3. The protein operates within bacterial outer membrane biogenesis; lipopolysaccharide biosynthesis. Functionally, bifunctional enzyme that catalyzes the oxidative decarboxylation of UDP-glucuronic acid (UDP-GlcUA) to UDP-4-keto-arabinose (UDP-Ara4O) and the addition of a formyl group to UDP-4-amino-4-deoxy-L-arabinose (UDP-L-Ara4N) to form UDP-L-4-formamido-arabinose (UDP-L-Ara4FN). The modified arabinose is attached to lipid A and is required for resistance to polymyxin and cationic antimicrobial peptides. This chain is Bifunctional polymyxin resistance protein ArnA, found in Pseudomonas fluorescens (strain ATCC BAA-477 / NRRL B-23932 / Pf-5).